The following is a 24-amino-acid chain: Brevinin-1Bd (24 aa).

Cys-18 and Cys-24 are disulfide-bonded.

As to expression, expressed by the skin glands.

It localises to the secreted. In terms of biological role, antibacterial activity against Gram-positive bacterium S.aureus and Gram-negative bacterium E.coli. Has activity against C.albicans. The protein is Brevinin-1Bd of Lithobates berlandieri (Rio Grande leopard frog).